The sequence spans 510 residues: NAD(P)H-quinone oxidoreductase subunit 2 A, chloroplastic (510 aa).

The next 13 membrane-spanning stretches (helical) occupy residues 24 to 44 (LLLF…GLIL), 57 to 77 (IPWL…ALLF), 99 to 119 (IFQF…VEYI), 124 to 144 (MAIT…MFLC), 149 to 169 (LITI…LSGY), 183 to 203 (YLLM…WLYG), 229 to 249 (ISIA…PAPF), 295 to 315 (WHLL…LIAI), 323 to 343 (MLAY…IVGD), 354 to 374 (YMLF…LFGL), 395 to 415 (ALSS…AGFF), 418 to 438 (LYLF…IGLL), and 484 to 504 (MILC…IIAI).

It belongs to the complex I subunit 2 family. In terms of assembly, NDH is composed of at least 16 different subunits, 5 of which are encoded in the nucleus.

Its subcellular location is the plastid. The protein localises to the chloroplast thylakoid membrane. It carries out the reaction a plastoquinone + NADH + (n+1) H(+)(in) = a plastoquinol + NAD(+) + n H(+)(out). It catalyses the reaction a plastoquinone + NADPH + (n+1) H(+)(in) = a plastoquinol + NADP(+) + n H(+)(out). Functionally, NDH shuttles electrons from NAD(P)H:plastoquinone, via FMN and iron-sulfur (Fe-S) centers, to quinones in the photosynthetic chain and possibly in a chloroplast respiratory chain. The immediate electron acceptor for the enzyme in this species is believed to be plastoquinone. Couples the redox reaction to proton translocation, and thus conserves the redox energy in a proton gradient. The protein is NAD(P)H-quinone oxidoreductase subunit 2 A, chloroplastic of Piper cenocladum (Ant piper).